The sequence spans 34 residues: Photosystem II reaction center protein M (34 aa).

The chain crosses the membrane as a helical span at residues 5-25 (ILAFIATALFILVPTAFLLII).

Belongs to the PsbM family. PSII is composed of 1 copy each of membrane proteins PsbA, PsbB, PsbC, PsbD, PsbE, PsbF, PsbH, PsbI, PsbJ, PsbK, PsbL, PsbM, PsbT, PsbX, PsbY, PsbZ, Psb30/Ycf12, at least 3 peripheral proteins of the oxygen-evolving complex and a large number of cofactors. It forms dimeric complexes.

The protein resides in the plastid. Its subcellular location is the chloroplast thylakoid membrane. Functionally, one of the components of the core complex of photosystem II (PSII). PSII is a light-driven water:plastoquinone oxidoreductase that uses light energy to abstract electrons from H(2)O, generating O(2) and a proton gradient subsequently used for ATP formation. It consists of a core antenna complex that captures photons, and an electron transfer chain that converts photonic excitation into a charge separation. This subunit is found at the monomer-monomer interface. This is Photosystem II reaction center protein M from Calycanthus floridus var. glaucus (Eastern sweetshrub).